We begin with the raw amino-acid sequence, 143 residues long: Transcriptional regulator MraZ (143 aa).

SpoVT-AbrB domains are found at residues 5–47 (QYEH…SLEE) and 76–119 (AVEC…SKEV).

It belongs to the MraZ family. In terms of assembly, forms oligomers.

It localises to the cytoplasm. It is found in the nucleoid. In Thermoanaerobacter sp. (strain X514), this protein is Transcriptional regulator MraZ.